We begin with the raw amino-acid sequence, 77 residues long: Liver-expressed antimicrobial peptide 2 (77 aa).

A signal peptide spans 1–22; that stretch reads MWHLKLCAVLMIFLLLLGQIDG. Residues 23 to 37 constitute a propeptide that is removed on maturation; the sequence is SPIPEVSSAKRRPRR. 2 disulfide bridges follow: Cys-54–Cys-65 and Cys-60–Cys-70.

This sequence belongs to the LEAP2 family.

It localises to the secreted. In terms of biological role, has an antimicrobial activity. The sequence is that of Liver-expressed antimicrobial peptide 2 (LEAP2) from Homo sapiens (Human).